The primary structure comprises 154 residues: Phosphopantetheine adenylyltransferase (154 aa).

Belongs to the eukaryotic CoaD family.

It localises to the cytoplasm. It carries out the reaction (R)-4'-phosphopantetheine + ATP + H(+) = 3'-dephospho-CoA + diphosphate. Its pathway is cofactor biosynthesis; coenzyme A biosynthesis. Functionally, reversibly transfers an adenylyl group from ATP to 4'-phosphopantetheine, yielding dephospho-CoA (dPCoA) and pyrophosphate. In Methanosarcina mazei (strain ATCC BAA-159 / DSM 3647 / Goe1 / Go1 / JCM 11833 / OCM 88) (Methanosarcina frisia), this protein is Phosphopantetheine adenylyltransferase.